The sequence spans 499 residues: uncharacterized protein (499 aa).

This is an uncharacterized protein from Metamycoplasma hominis (strain ATCC 23114 / DSM 25592 / NBRC 14850 / NCTC 10111 / PG21) (Mycoplasma hominis).